A 309-amino-acid chain; its full sequence is Aspartate carbamoyltransferase catalytic subunit (309 aa).

Arginine 48 and threonine 49 together coordinate carbamoyl phosphate. Lysine 76 serves as a coordination point for L-aspartate. The carbamoyl phosphate site is built by arginine 98, histidine 128, and glutamine 131. Positions 161 and 211 each coordinate L-aspartate. Positions 250 and 251 each coordinate carbamoyl phosphate.

It belongs to the aspartate/ornithine carbamoyltransferase superfamily. ATCase family. As to quaternary structure, heterododecamer (2C3:3R2) of six catalytic PyrB chains organized as two trimers (C3), and six regulatory PyrI chains organized as three dimers (R2).

It carries out the reaction carbamoyl phosphate + L-aspartate = N-carbamoyl-L-aspartate + phosphate + H(+). It participates in pyrimidine metabolism; UMP biosynthesis via de novo pathway; (S)-dihydroorotate from bicarbonate: step 2/3. Its function is as follows. Catalyzes the condensation of carbamoyl phosphate and aspartate to form carbamoyl aspartate and inorganic phosphate, the committed step in the de novo pyrimidine nucleotide biosynthesis pathway. In Oceanobacillus iheyensis (strain DSM 14371 / CIP 107618 / JCM 11309 / KCTC 3954 / HTE831), this protein is Aspartate carbamoyltransferase catalytic subunit.